The primary structure comprises 471 residues: UDP-N-acetylmuramate--L-alanine ligase (471 aa).

114 to 120 is a binding site for ATP; the sequence is GTHGKTT.

The protein belongs to the MurCDEF family.

The protein localises to the cytoplasm. It carries out the reaction UDP-N-acetyl-alpha-D-muramate + L-alanine + ATP = UDP-N-acetyl-alpha-D-muramoyl-L-alanine + ADP + phosphate + H(+). It participates in cell wall biogenesis; peptidoglycan biosynthesis. Its function is as follows. Cell wall formation. The chain is UDP-N-acetylmuramate--L-alanine ligase from Methylobacterium nodulans (strain LMG 21967 / CNCM I-2342 / ORS 2060).